Here is a 276-residue protein sequence, read N- to C-terminus: Anthranilate synthase beta subunit 1, chloroplastic (276 aa).

The transit peptide at 1–50 (MAASTLYKSCLLQPKSGSTTRRLNPSLVNPLTNPTRVSVLGKSRRDVFAK) directs the protein to the chloroplast. In terms of domain architecture, Glutamine amidotransferase type-1 spans 74–273 (PIIVIDNYDS…IKIVEKKESE (200 aa)). Cys-152 serves as the catalytic Nucleophile. Active-site residues include His-247 and Glu-249.

In terms of assembly, heterotetramer consisting of two non-identical subunits: a beta subunit and a large alpha subunit. In terms of tissue distribution, expressed in the central cylinder of mature primary root zones, including pericycle and early lateral root primordia, and vasculature of cotyledons.

Its subcellular location is the plastid. It is found in the chloroplast. It catalyses the reaction chorismate + L-glutamine = anthranilate + pyruvate + L-glutamate + H(+). The protein operates within amino-acid biosynthesis; L-tryptophan biosynthesis; L-tryptophan from chorismate: step 1/5. Its function is as follows. Part of a heterotetrameric complex that catalyzes the two-step biosynthesis of anthranilate, an intermediate in the biosynthesis of L-tryptophan. In the first step, the glutamine-binding beta subunit of anthranilate synthase (AS) provides the glutamine amidotransferase activity which generates ammonia as a substrate that, along with chorismate, is used in the second step, catalyzed by the large alpha subunit of AS to produce anthranilate. Plays an important regulatory role in auxin production via the tryptophan-dependent biosynthetic pathway. This chain is Anthranilate synthase beta subunit 1, chloroplastic (ASB1), found in Arabidopsis thaliana (Mouse-ear cress).